We begin with the raw amino-acid sequence, 522 residues long: Signal transduction histidine-protein kinase/phosphatase MprB (522 aa).

Residues methionine 1–leucine 30 lie on the Cytoplasmic side of the membrane. A helical membrane pass occupies residues leucine 31–isoleucine 51. At serine 52–arginine 167 the chain is on the extracellular side. A helical membrane pass occupies residues tryptophan 168–valine 188. The Cytoplasmic portion of the chain corresponds to threonine 189 to arginine 522. The HAMP domain occupies arginine 190–glutamate 242. The Histidine kinase domain maps to aspartate 250–serine 470. Histidine 253 bears the Phosphohistidine; by autocatalysis mark. The interval proline 467–arginine 522 is disordered. A compositionally biased stretch (polar residues) spans threonine 502–arginine 522.

It depends on Mg(2+) as a cofactor. Mn(2+) is required as a cofactor. In terms of processing, autophosphorylated.

The protein localises to the cell membrane. The enzyme catalyses ATP + protein L-histidine = ADP + protein N-phospho-L-histidine.. In terms of biological role, member of the two-component regulatory system MprB/MprA which contributes to maintaining a balance among several systems involved in stress resistance and is required for establishment and maintenance of persistent infection in the host. In response to environmental signals MprB acts both as a membrane-associated protein kinase that undergoes autophosphorylation and subsequently transfers the phosphate to MprA, and a protein phosphatase that dephosphorylates phospho-MprA. The chain is Signal transduction histidine-protein kinase/phosphatase MprB (mprB) from Mycolicibacterium paratuberculosis (strain ATCC BAA-968 / K-10) (Mycobacterium paratuberculosis).